The sequence spans 354 residues: Probable L-ascorbate-6-phosphate lactonase UlaG (354 aa).

Belongs to the UlaG family. A divalent metal cation is required as a cofactor.

It is found in the cytoplasm. It carries out the reaction L-ascorbate 6-phosphate + H2O = 3-dehydro-L-gulonate 6-phosphate. It participates in cofactor degradation; L-ascorbate degradation; D-xylulose 5-phosphate from L-ascorbate: step 1/4. Probably catalyzes the hydrolysis of L-ascorbate-6-P into 3-keto-L-gulonate-6-P. Is essential for L-ascorbate utilization under anaerobic conditions. This is Probable L-ascorbate-6-phosphate lactonase UlaG from Escherichia coli O139:H28 (strain E24377A / ETEC).